The chain runs to 435 residues: Trigger factor (435 aa).

The PPIase FKBP-type domain maps to 162 to 247 (GDRINIDYRG…LSGVESSKLP (86 aa)).

The protein belongs to the FKBP-type PPIase family. Tig subfamily.

It localises to the cytoplasm. The enzyme catalyses [protein]-peptidylproline (omega=180) = [protein]-peptidylproline (omega=0). Its function is as follows. Involved in protein export. Acts as a chaperone by maintaining the newly synthesized protein in an open conformation. Functions as a peptidyl-prolyl cis-trans isomerase. This Nitrosospira multiformis (strain ATCC 25196 / NCIMB 11849 / C 71) protein is Trigger factor.